Here is a 697-residue protein sequence, read N- to C-terminus: Polyribonucleotide nucleotidyltransferase (697 aa).

Asp488 and Asp494 together coordinate Mg(2+). The KH domain maps to 555–614 (PTLLTLKINPDKIRDVIGKGGATIRALTEETGCTIDIEDDGSVKIYGETREKADEAVRRV). The S1 motif domain maps to 624–692 (GAIYEGKVTR…QRGRIKLSMK (69 aa)).

The protein belongs to the polyribonucleotide nucleotidyltransferase family. As to quaternary structure, component of the RNA degradosome, which is a multiprotein complex involved in RNA processing and mRNA degradation. Mg(2+) serves as cofactor.

It is found in the cytoplasm. It catalyses the reaction RNA(n+1) + phosphate = RNA(n) + a ribonucleoside 5'-diphosphate. Functionally, involved in mRNA degradation. Catalyzes the phosphorolysis of single-stranded polyribonucleotides processively in the 3'- to 5'-direction. The protein is Polyribonucleotide nucleotidyltransferase of Alcanivorax borkumensis (strain ATCC 700651 / DSM 11573 / NCIMB 13689 / SK2).